We begin with the raw amino-acid sequence, 267 residues long: X-box-binding protein 1 (267 aa).

Over 1 to 180 (MVVVAAAPSA…VQAQLSPPQN (180 aa)) the chain is Cytoplasmic. Residues 35 to 56 (VPGPRAAGSEASGTPQARKRQR) form a disordered region. S61 bears the Phosphoserine mark. In terms of domain architecture, bZIP spans 63–126 (EEKALRRKLK…HGLVVENQEL (64 aa)). The basic motif stretch occupies residues 65–87 (KALRRKLKNRVAAQTARDRKKAR). Residues 69 to 85 (RKLKNRVAAQTARDRKK) form a nuclear localization signal (NLS) region. The interval 91–126 (LEQQVVDLEEENHKLQLENQLLREKTHGLVVENQEL) is leucine-zipper. A helical; Signal-anchor for type II membrane protein membrane pass occupies residues 181–198 (IFPWTLTLLPLQILSLIS). The Lumenal portion of the chain corresponds to 199 to 267 (FWAFWTSWTL…FVLTMYTPSL (69 aa)). Residues 230 to 256 (QKDLVPYQPPFLCQWGPHQPSWKPLMN) are necessary for the translational pausing of its own mRNA.

It belongs to the bZIP family. Isoform 1 interacts with HM13. Isoform 1 interacts with RNF139; the interaction induces ubiquitination and degradation of isoform 1. Isoform 1 interacts (via luminal domain) with DERL1; the interaction obviates the need for ectodomain shedding prior HM13/SPP-mediated XBP1 isoform 1 cleavage. Isoform 1 interacts with isoform 2; the interaction sequesters isoform 2 from the nucleus and enhances isoform 2 degradation in the cytoplasm. Isoform 1 interacts with HDAC3 and AKT1; the interactions occur in endothelial cell (EC) under disturbed flow. Isoform 1 interacts with the oncoprotein FOS. Isoform 2 interacts with ATF6; the interaction occurs in a ER stress-dependent manner and is required for DNA binding to the unfolded protein response element (UPRE). Isoform 2 interacts with PIK3R1; the interaction is direct and induces translocation of XBP1 isoform 2 into the nucleus and the unfolded protein response (UPR) XBP1-dependent target genes activation in a ER stress- and/or insulin-dependent but PI3K-independent manner. Isoform 2 interacts with SIRT1. Isoform 2 interacts with PIK3R1 and PIK3R2; the interactions are direct and induce translocation of XBP1 isoform 2 into the nucleus and the unfolded protein response (UPR) XBP1-dependent target genes activation in a ER stress- and/or insulin-dependent but PI3K-independent manner. Isoform 2 interacts with FOXO1; the interaction is direct and leads to FOXO1 ubiquitination and degradation via the proteasome pathway in hepatocytes. In terms of processing, acetylated by EP300; acetylation positively regulates the transcriptional activity of XBP1 isoform 2. Isoform 2 is deacetylated by SIRT1; deacetylation negatively regulates the transcriptional activity of XBP1 isoform 2. Post-translationally, ubiquitinated, leading to proteasomal degradation in response to ER stress. X-box-binding protein 1, cytoplasmic form and luminal form are produced by intramembrane proteolytic cleavage of ER membrane-anchored isoform 1 triggered by HM13/SPP in a DERL1-RNF139-dependent and VCP/p97-independent manner. X-box-binding protein 1, luminal form is ubiquitinated leading to proteasomal degradation. Isoform 1 and isoform 2 are expressed at higher level in branch curves of vessel walls and in atherosclerotic plaques relative to healthy segments of the same aortas (at protein level). Expressed in skeletal muscles, plasma cells and pancreatic beta cells. Isoform 1 and isoform 2 are expressed in gonadal adipose tissue. Isoform 1 is expressed in inguinal adipose tissue.

The protein resides in the endoplasmic reticulum. It localises to the nucleus. It is found in the cytoplasm. The protein localises to the endoplasmic reticulum membrane. Its subcellular location is the membrane. Functionally, functions as a transcription factor during endoplasmic reticulum stress by regulating the unfolded protein response (UPR). Required for cardiac myogenesis and hepatogenesis during embryonic development and the development of secretory tissues such as exocrine pancreas and salivary gland. Involved in differentiation of B lymphocytes to plasma cells and production of immunoglobulins. Modulates the cellular response to ER stress in a PIK3R-dependent manner. Binds to the cis-acting X box present in the promoter regions of major histocompatibility complex class II genes. Involved in VEGF-induced endothelial cell (EC) proliferation and retinal blood vessel formation during embryonic development but also for angiogenesis in adult tissues under ischemic conditions. Also functions as a major regulator of the UPR in obesity-induced insulin resistance and type 2 diabetes for the management of obesity and diabetes prevention. In terms of biological role, plays a role in the unconventional cytoplasmic splicing processing of its own mRNA triggered by the endoplasmic reticulum (ER) transmembrane endoribonuclease ERN1: upon ER stress, the emerging XBP1 polypeptide chain, as part of a mRNA-ribosome-nascent chain (R-RNC) complex, cotranslationally recruits its own unprocessed mRNA through transient docking to the ER membrane and translational pausing, therefore facilitating efficient IRE1-mediated XBP1 mRNA isoform 2 production. In endothelial cells (EC), associated with KDR, promotes IRE1-mediated XBP1 mRNA isoform 2 production in a vascular endothelial growth factor (VEGF)-dependent manner, leading to EC proliferation and angiogenesis. Functions as a negative feed-back regulator of the potent transcription factor XBP1 isoform 2 protein levels through proteasome-mediated degradation, thus preventing the constitutive activation of the ER stress response signaling pathway. Inhibits the transactivation activity of XBP1 isoform 2 in myeloma cells. Acts as a weak transcriptional factor. Together with HDAC3, contributes to the activation of NFE2L2-mediated HMOX1 transcription factor gene expression in a PI(3)K/mTORC2/Akt-dependent signaling pathway leading to EC survival under disturbed flow/oxidative stress. Binds to the ER stress response element (ERSE) upon ER stress. Binds to the consensus 5'-GATGACGTG[TG]N(3)[AT]T-3' sequence related to cAMP responsive element (CRE)-like sequences. Binds the Tax-responsive element (TRE) present in the long terminal repeat (LTR) of T-cell leukemia virus type 1 (HTLV-I) and to the TPA response elements (TRE). Associates preferentially to the HDAC3 gene promoter region in a static flow-dependent manner. Binds to the CDH5/VE-cadherin gene promoter region. Its function is as follows. Functions as a stress-inducible potent transcriptional activator during endoplasmic reticulum (ER) stress by inducing unfolded protein response (UPR) target genes via binding to the UPR element (UPRE). Up-regulates target genes encoding ER chaperones and ER-associated degradation (ERAD) components to enhance the capacity of productive folding and degradation mechanism, respectively, in order to maintain the homeostasis of the ER under ER stress. Plays a role in the production of immunoglobulins and interleukin-6 in the presence of stimuli required for plasma cell differentiation, and promotes as well membrane phospholipid biosynthesis necessary for ER expansion. Contributes to the VEGF-induced endothelial cell (EC) growth and proliferation in a Akt/GSK-dependent and/or -independent signaling pathway, respectively, leading to beta-catenin nuclear translocation and E2F2 gene expression. Promotes umbilical vein EC apoptosis and atherosclerotisis development in a caspase-dependent signaling pathway, and contributes to VEGF-induced EC proliferation and angiogenesis in adult tissues under ischemic conditions. Involved in the regulation of endostatin-induced autophagy in EC through BECN1 transcriptional activation. Plays a role as an oncogene by promoting tumor progression: stimulates zinc finger protein SNAI1 transcription to induce epithelial-to-mesenchymal (EMT) transition, cell migration and invasion of breast cancer cells. Involved in adipocyte differentiation by regulating lipogenic gene expression during lactation. Plays a role in the survival of both dopaminergic neurons of the substantia nigra pars compacta (SNpc), by maintaining protein homeostasis and of myeloma cells. Increases insulin sensitivity in the liver as a response to a high carbohydrate diet, resulting in improved glucose tolerance. Also improves glucose homeostasis in an ER stress- and/or insulin-independent manner through both binding and proteasome-induced degradation of the transcription factor FOXO1, hence resulting in suppression of gluconeogenic genes expression and in a reduction of blood glucose levels. Controls the induction of de novo fatty acid synthesis in hepatocytes by regulating the expression of a subset of lipogenic genes in an ER stress- and UPR-independent manner. Binds to the 5'-CCACG-3' motif in the PPARG promoter. Associates preferentially to the HDAC3 gene promoter region in a disturbed flow-dependent manner. Binds to the BECN1 gene promoter region. Binds to the CDH5/VE-cadherin gene promoter region. Binds to the ER stress response element (ERSE) upon ER stress. This Mus musculus (Mouse) protein is X-box-binding protein 1.